A 944-amino-acid polypeptide reads, in one-letter code: 2-oxoglutarate dehydrogenase E1 component (944 aa).

A disordered region spans residues R914 to N944. Residues P925–V936 are compositionally biased toward basic and acidic residues.

Belongs to the alpha-ketoglutarate dehydrogenase family. As to quaternary structure, homodimer. Part of the 2-oxoglutarate dehydrogenase (OGDH) complex composed of E1 (2-oxoglutarate dehydrogenase), E2 (dihydrolipoamide succinyltransferase) and E3 (dihydrolipoamide dehydrogenase); the complex contains multiple copies of the three enzymatic components (E1, E2 and E3). The cofactor is thiamine diphosphate.

The enzyme catalyses N(6)-[(R)-lipoyl]-L-lysyl-[protein] + 2-oxoglutarate + H(+) = N(6)-[(R)-S(8)-succinyldihydrolipoyl]-L-lysyl-[protein] + CO2. Functionally, E1 component of the 2-oxoglutarate dehydrogenase (OGDH) complex which catalyzes the decarboxylation of 2-oxoglutarate, the first step in the conversion of 2-oxoglutarate to succinyl-CoA and CO(2). The polypeptide is 2-oxoglutarate dehydrogenase E1 component (Bacillus subtilis (strain 168)).